Consider the following 268-residue polypeptide: MVRKSPGSGKEEDFTFISPVVKYLLIFFNMLFWVISMVMVGIGVYARLLKHAEAAMACLAVDPALLLIGVGILMFLITFCGCIGSLRENICLLQTFSICLTLVFLLQLAVGIVGFIFSDKARGKVSEIISNAIEHYRDDLDLQNLIDFGQKEFSCCGGISYKDWSQNMYFNCSSENRSQERCSVPYSCCLHDEGEAVINTLCGQGMQELDYLEAGEFIHTNGCIDRLVNWIHSNLFLLGGVALGLAIPQVTKHLRAKLIYTWRIGIQV.

The Cytoplasmic portion of the chain corresponds to 1-23 (MVRKSPGSGKEEDFTFISPVVKY). The chain crosses the membrane as a helical span at residues 24 to 44 (LLIFFNMLFWVISMVMVGIGV). At 45-63 (YARLLKHAEAAMACLAVDP) the chain is on the extracellular side. A helical membrane pass occupies residues 64-84 (ALLLIGVGILMFLITFCGCIG). Residues 85–95 (SLRENICLLQT) lie on the Cytoplasmic side of the membrane. Residues 96–116 (FSICLTLVFLLQLAVGIVGFI) traverse the membrane as a helical segment. Residues 117 to 226 (FSDKARGKVS…FIHTNGCIDR (110 aa)) lie on the Extracellular side of the membrane. 4 cysteine pairs are disulfide-bonded: Cys155–Cys223, Cys156–Cys188, Cys172–Cys182, and Cys189–Cys202. N-linked (GlcNAc...) asparagine glycosylation is found at Asn171 and Asn176. A helical transmembrane segment spans residues 227 to 247 (LVNWIHSNLFLLGGVALGLAI). Over 248-268 (PQVTKHLRAKLIYTWRIGIQV) the chain is Cytoplasmic.

The protein belongs to the tetraspanin (TM4SF) family. In terms of assembly, homodimer; disulfide-linked.

Its subcellular location is the cell membrane. It localises to the cell junction. The protein resides in the adherens junction. The protein localises to the cytoplasm. In terms of biological role, part of TspanC8 subgroup, composed of 6 members that interact with the transmembrane metalloprotease ADAM10. This interaction is required for ADAM10 exit from the endoplasmic reticulum and for enzymatic maturation and trafficking to the cell surface as well as substrate specificity. Different TspanC8/ADAM10 complexes have distinct substrates. The polypeptide is Tetraspanin-33 (tspan33) (Xenopus laevis (African clawed frog)).